The sequence spans 417 residues: Transmembrane protease serine 11D (417 aa).

The Cytoplasmic portion of the chain corresponds to 1–17 (MYRPRSMVSPSRFFNPF). Residues 18-38 (MVALIVIITVGLLAMTAGLLI) form a helical; Signal-anchor for type II membrane protein membrane-spanning segment. Residues 39-417 (HFLAFDKRAY…RNWIRQQTGI (379 aa)) are Extracellular-facing. The 117-residue stretch at 46–162 (RAYFYHSNFH…SNGITSLTDQ (117 aa)) folds into the SEA domain. Cystine bridges form between C172–C291, C211–C227, C336–C352, and C363–C392. The Peptidase S1 domain occupies 186 to 416 (IIGGTQAETG…YRNWIRQQTG (231 aa)). Catalysis depends on charge relay system residues H226 and D271. S367 functions as the Charge relay system in the catalytic mechanism.

Belongs to the peptidase S1 family. As to quaternary structure, monomer. Isoform 1 and isoform 2 are expressed in the esophagus, tongue and trachea. Isoform 2 is also highly expressed in the adrenal cortex and heart.

The protein resides in the cell membrane. It is found in the secreted. May play some biological role in the host defense system on the mucous membrane independently of or in cooperation with other substances in airway mucous or bronchial secretions. Plays a role in the proteolytic processing of ACE2. Preferentially cleaves the C-terminal side of arginine residues at the P1 position of certain peptides. Isoform 2 may play a key role in regulating adrenal proliferation by specifically cleaving N-POMC. The sequence is that of Transmembrane protease serine 11D (Tmprss11d) from Rattus norvegicus (Rat).